The sequence spans 482 residues: Glutamyl-tRNA(Gln) amidotransferase subunit A (482 aa).

Residues lysine 75 and serine 150 each act as charge relay system in the active site. Serine 174 serves as the catalytic Acyl-ester intermediate.

The protein belongs to the amidase family. GatA subfamily. In terms of assembly, heterotrimer of A, B and C subunits.

The enzyme catalyses L-glutamyl-tRNA(Gln) + L-glutamine + ATP + H2O = L-glutaminyl-tRNA(Gln) + L-glutamate + ADP + phosphate + H(+). Allows the formation of correctly charged Gln-tRNA(Gln) through the transamidation of misacylated Glu-tRNA(Gln) in organisms which lack glutaminyl-tRNA synthetase. The reaction takes place in the presence of glutamine and ATP through an activated gamma-phospho-Glu-tRNA(Gln). This Thermosynechococcus vestitus (strain NIES-2133 / IAM M-273 / BP-1) protein is Glutamyl-tRNA(Gln) amidotransferase subunit A.